The following is a 211-amino-acid chain: Urease accessory protein UreG (211 aa).

Position 8–15 (8–15) interacts with GTP; the sequence is GPVGSGKT.

The protein belongs to the SIMIBI class G3E GTPase family. UreG subfamily. In terms of assembly, homodimer. UreD, UreF and UreG form a complex that acts as a GTP-hydrolysis-dependent molecular chaperone, activating the urease apoprotein by helping to assemble the nickel containing metallocenter of UreC. The UreE protein probably delivers the nickel.

It localises to the cytoplasm. Functionally, facilitates the functional incorporation of the urease nickel metallocenter. This process requires GTP hydrolysis, probably effectuated by UreG. This Metallosphaera sedula (strain ATCC 51363 / DSM 5348 / JCM 9185 / NBRC 15509 / TH2) protein is Urease accessory protein UreG.